We begin with the raw amino-acid sequence, 108 residues long: uncharacterized protein (108 aa).

3 helical membrane-spanning segments follow: residues 4–24, 46–66, and 81–101; these read IIFLFRAIWLALSLLILFFSM, GMMVICFPTGIVFFIALIFIG, and IMAIIIWLYFLSGGYIQWFVL.

The protein resides in the cell membrane. This is an uncharacterized protein from Escherichia coli O157:H7.